Here is a 369-residue protein sequence, read N- to C-terminus: Peridinin-chlorophyll a-binding protein 2, chloroplastic (369 aa).

The N-terminal 56 residues, 1-56 (MVRSGKKAVVLATVAFCATSVVQKTCGFVPSPLRQRAAAAGAAASVATMFAPAAFA), are a transit peptide targeting the chloroplast. 2 consecutive repeat copies span residues 57 to 219 (DEIG…VPSG) and 220 to 369 (DTIG…AAQR).

As to quaternary structure, homotrimer.

The protein localises to the plastid. The protein resides in the chloroplast. Functionally, water-soluble antenna for capture of solar energy in the blue-green range. Peridinin is an asymmetric carotenoid. This is Peridinin-chlorophyll a-binding protein 2, chloroplastic from Amphidinium carterae (Dinoflagellate).